The sequence spans 162 residues: 2-C-methyl-D-erythritol 2,4-cyclodiphosphate synthase (162 aa).

A divalent metal cation-binding residues include Asp12 and His14. Residues 12-14 (DVH) and 38-39 (HS) each bind 4-CDP-2-C-methyl-D-erythritol 2-phosphate. An a divalent metal cation-binding site is contributed by His46. 4-CDP-2-C-methyl-D-erythritol 2-phosphate contacts are provided by residues 60–62 (DIG), 65–69 (FPDTD), and Arg146.

Belongs to the IspF family. As to quaternary structure, homotrimer. A divalent metal cation is required as a cofactor.

It catalyses the reaction 4-CDP-2-C-methyl-D-erythritol 2-phosphate = 2-C-methyl-D-erythritol 2,4-cyclic diphosphate + CMP. Its pathway is isoprenoid biosynthesis; isopentenyl diphosphate biosynthesis via DXP pathway; isopentenyl diphosphate from 1-deoxy-D-xylulose 5-phosphate: step 4/6. Involved in the biosynthesis of isopentenyl diphosphate (IPP) and dimethylallyl diphosphate (DMAPP), two major building blocks of isoprenoid compounds. Catalyzes the conversion of 4-diphosphocytidyl-2-C-methyl-D-erythritol 2-phosphate (CDP-ME2P) to 2-C-methyl-D-erythritol 2,4-cyclodiphosphate (ME-CPP) with a corresponding release of cytidine 5-monophosphate (CMP). This is 2-C-methyl-D-erythritol 2,4-cyclodiphosphate synthase from Bordetella avium (strain 197N).